Reading from the N-terminus, the 120-residue chain is 2-amino-4-hydroxy-6-hydroxymethyldihydropteridine pyrophosphokinase (120 aa).

Belongs to the HPPK family.

The enzyme catalyses 6-hydroxymethyl-7,8-dihydropterin + ATP = (7,8-dihydropterin-6-yl)methyl diphosphate + AMP + H(+). It participates in cofactor biosynthesis; tetrahydrofolate biosynthesis; 2-amino-4-hydroxy-6-hydroxymethyl-7,8-dihydropteridine diphosphate from 7,8-dihydroneopterin triphosphate: step 4/4. In terms of biological role, catalyzes the transfer of pyrophosphate from adenosine triphosphate (ATP) to 6-hydroxymethyl-7,8-dihydropterin, an enzymatic step in folate biosynthesis pathway. This Pseudomonas putida (Arthrobacter siderocapsulatus) protein is 2-amino-4-hydroxy-6-hydroxymethyldihydropteridine pyrophosphokinase (folK).